We begin with the raw amino-acid sequence, 428 residues long: Serine--tRNA ligase (428 aa).

235–237 (TAE) contacts L-serine. 266 to 268 (RSE) serves as a coordination point for ATP. Glu-289 serves as a coordination point for L-serine. 353 to 356 (EISS) serves as a coordination point for ATP. Residue Ser-389 coordinates L-serine.

Belongs to the class-II aminoacyl-tRNA synthetase family. Type-1 seryl-tRNA synthetase subfamily. As to quaternary structure, homodimer. The tRNA molecule binds across the dimer.

Its subcellular location is the cytoplasm. The catalysed reaction is tRNA(Ser) + L-serine + ATP = L-seryl-tRNA(Ser) + AMP + diphosphate + H(+). The enzyme catalyses tRNA(Sec) + L-serine + ATP = L-seryl-tRNA(Sec) + AMP + diphosphate + H(+). The protein operates within aminoacyl-tRNA biosynthesis; selenocysteinyl-tRNA(Sec) biosynthesis; L-seryl-tRNA(Sec) from L-serine and tRNA(Sec): step 1/1. Catalyzes the attachment of serine to tRNA(Ser). Is also able to aminoacylate tRNA(Sec) with serine, to form the misacylated tRNA L-seryl-tRNA(Sec), which will be further converted into selenocysteinyl-tRNA(Sec). The polypeptide is Serine--tRNA ligase (Shewanella baltica (strain OS185)).